Here is a 78-residue protein sequence, read N- to C-terminus: Small ribosomal subunit protein bS18 (78 aa).

The protein belongs to the bacterial ribosomal protein bS18 family. In terms of assembly, part of the 30S ribosomal subunit. Forms a tight heterodimer with protein bS6.

Its function is as follows. Binds as a heterodimer with protein bS6 to the central domain of the 16S rRNA, where it helps stabilize the platform of the 30S subunit. The polypeptide is Small ribosomal subunit protein bS18 (Limosilactobacillus reuteri (strain DSM 20016) (Lactobacillus reuteri)).